The primary structure comprises 334 residues: Glycerol-3-phosphate dehydrogenase [NAD(P)+] (334 aa).

NADPH-binding residues include S14, Y15, H35, and K109. Sn-glycerol 3-phosphate contacts are provided by K109, G138, and T140. A142 contributes to the NADPH binding site. Sn-glycerol 3-phosphate-binding residues include K194, D247, S257, R258, and N259. Residue K194 is the Proton acceptor of the active site. Residue R258 coordinates NADPH. The NADPH site is built by V282 and E284.

Belongs to the NAD-dependent glycerol-3-phosphate dehydrogenase family.

It is found in the cytoplasm. It carries out the reaction sn-glycerol 3-phosphate + NAD(+) = dihydroxyacetone phosphate + NADH + H(+). The catalysed reaction is sn-glycerol 3-phosphate + NADP(+) = dihydroxyacetone phosphate + NADPH + H(+). Its pathway is membrane lipid metabolism; glycerophospholipid metabolism. Catalyzes the reduction of the glycolytic intermediate dihydroxyacetone phosphate (DHAP) to sn-glycerol 3-phosphate (G3P), the key precursor for phospholipid synthesis. The polypeptide is Glycerol-3-phosphate dehydrogenase [NAD(P)+] (Psychromonas ingrahamii (strain DSM 17664 / CCUG 51855 / 37)).